Here is a 198-residue protein sequence, read N- to C-terminus: Basic helix-loop-helix transcription factor amos (198 aa).

The tract at residues 76–131 is disordered; the sequence is EQQQHHLQANPLGKNQGRSPRYWNKQQRSKPYDKLSTSMSSSTSSASSSSSSSAGF. Residues 111 to 129 show a composition bias toward low complexity; sequence STSMSSSTSSASSSSSSSA. The bHLH domain maps to 138 to 190; the sequence is KRRLAANARERRRMNSLNDAFDKLRDVVPSLGHDRRLSKYETLQMAQAYIGDL.

In terms of assembly, efficient DNA binding requires dimerization with another bHLH protein. Interacts with Daughterless (da). During embryonic development, expression is seen in a small cluster of ectodermal cells during stage 10 which becomes restricted to 1 cell by stage 11. Expression is lost from this cell in the thorax and then the abdomen. Later expression is restricted to sensory organ precursors. Very transient expression was detected in distal leg disks at approximately 0-4 hours after puparium formation (APF), correlating with the anlage of the innervated tarsal claw.

The protein localises to the nucleus. In terms of biological role, transcription factor involved in early neurogenesis; sensillum basiconica formation and maybe sensillum trichodea development. Promotes multiple dendritic (MD) neuron formation. Required for olfactory sensilla; regulated by lozenge (lz). The protein is Basic helix-loop-helix transcription factor amos (amos) of Drosophila melanogaster (Fruit fly).